A 372-amino-acid chain; its full sequence is NAD(P)H-quinone oxidoreductase subunit 1 (372 aa).

A run of 8 helical transmembrane segments spans residues 29–49, 97–117, 130–150, 176–196, 204–224, 254–274, 308–328, and 347–367; these read WIPF…LVVV, WLFT…YLIV, VGIF…LMAG, LALS…IDIV, ILGW…IAAL, FALF…VFAI, SLGI…AVLM, and FLLP…LAFP.

It belongs to the complex I subunit 1 family. As to quaternary structure, NDH-1 is composed of at least 11 different subunits.

It is found in the cellular thylakoid membrane. It catalyses the reaction a plastoquinone + NADH + (n+1) H(+)(in) = a plastoquinol + NAD(+) + n H(+)(out). The enzyme catalyses a plastoquinone + NADPH + (n+1) H(+)(in) = a plastoquinol + NADP(+) + n H(+)(out). In terms of biological role, NDH-1 shuttles electrons from an unknown electron donor, via FMN and iron-sulfur (Fe-S) centers, to quinones in the respiratory and/or the photosynthetic chain. The immediate electron acceptor for the enzyme in this species is believed to be plastoquinone. Couples the redox reaction to proton translocation, and thus conserves the redox energy in a proton gradient. The sequence is that of NAD(P)H-quinone oxidoreductase subunit 1 from Crocosphaera subtropica (strain ATCC 51142 / BH68) (Cyanothece sp. (strain ATCC 51142)).